A 331-amino-acid polypeptide reads, in one-letter code: DNA-directed RNA polymerase subunit alpha (331 aa).

Residues 1–223 (MDQKRPQLKA…DELTVFGNVE (223 aa)) form an alpha N-terminal domain (alpha-NTD) region. An alpha C-terminal domain (alpha-CTD) region spans residues 260 to 331 (PYPADLDTPR…LAQFGLALRD (72 aa)).

It belongs to the RNA polymerase alpha chain family. As to quaternary structure, homodimer. The RNAP catalytic core consists of 2 alpha, 1 beta, 1 beta' and 1 omega subunit. When a sigma factor is associated with the core the holoenzyme is formed, which can initiate transcription.

The enzyme catalyses RNA(n) + a ribonucleoside 5'-triphosphate = RNA(n+1) + diphosphate. In terms of biological role, DNA-dependent RNA polymerase catalyzes the transcription of DNA into RNA using the four ribonucleoside triphosphates as substrates. This Deinococcus geothermalis (strain DSM 11300 / CIP 105573 / AG-3a) protein is DNA-directed RNA polymerase subunit alpha.